A 136-amino-acid chain; its full sequence is Putative covalently bound cell wall protein 22 (136 aa).

The N-terminal stretch at 1 to 18 is a signal peptide; the sequence is MQFSTVASIAAIAAVASA. Asn-21 and Asn-82 each carry an N-linked (GlcNAc...) asparagine glycan. A disordered region spans residues 73 to 110; the sequence is PLPTTEAPKNTTSPAPTEKPTEKPTEKPTQQGSSTQTV. Residues 99 to 110 are compositionally biased toward low complexity; that stretch reads KPTQQGSSTQTV. Gly-115 is lipidated: GPI-anchor amidated glycine. A propeptide spans 116–136 (removed in mature form); it reads AAVKALPAAGALLAGAAALLL.

Belongs to the PGA59 family. The GPI-anchor is attached to the protein in the endoplasmic reticulum and serves to target the protein to the cell surface. There, the glucosamine-inositol phospholipid moiety is cleaved off and the GPI-modified mannoprotein is covalently attached via its lipidless GPI glycan remnant to the 1,6-beta-glucan of the outer cell wall layer.

The protein localises to the secreted. Its subcellular location is the cell wall. It is found in the membrane. Functionally, cell wall protein necessary for cell wall integrity. In Saccharomyces cerevisiae (strain ATCC 204508 / S288c) (Baker's yeast), this protein is Putative covalently bound cell wall protein 22 (CCW22).